Reading from the N-terminus, the 401-residue chain is tRNA(Met) cytidine acetate ligase (401 aa).

Residues 7 to 20 (IVEY…HLYH), G102, N164, and R189 contribute to the ATP site.

This sequence belongs to the TmcAL family.

It localises to the cytoplasm. It catalyses the reaction cytidine(34) in elongator tRNA(Met) + acetate + ATP = N(4)-acetylcytidine(34) in elongator tRNA(Met) + AMP + diphosphate. Functionally, catalyzes the formation of N(4)-acetylcytidine (ac(4)C) at the wobble position of elongator tRNA(Met), using acetate and ATP as substrates. First activates an acetate ion to form acetyladenylate (Ac-AMP) and then transfers the acetyl group to tRNA to form ac(4)C34. This Caldanaerobacter subterraneus subsp. tengcongensis (strain DSM 15242 / JCM 11007 / NBRC 100824 / MB4) (Thermoanaerobacter tengcongensis) protein is tRNA(Met) cytidine acetate ligase.